A 406-amino-acid polypeptide reads, in one-letter code: Multifunctional CCA protein (406 aa).

ATP is bound by residues Gly8 and Arg11. CTP contacts are provided by Gly8 and Arg11. Mg(2+) is bound by residues Asp21 and Asp23. ATP is bound by residues Arg91, Arg138, and Arg141. CTP contacts are provided by Arg91, Arg138, and Arg141. Positions Thr229–Leu331 constitute an HD domain.

It belongs to the tRNA nucleotidyltransferase/poly(A) polymerase family. Bacterial CCA-adding enzyme type 1 subfamily. Monomer. Can also form homodimers and oligomers. Mg(2+) serves as cofactor. The cofactor is Ni(2+).

The catalysed reaction is a tRNA precursor + 2 CTP + ATP = a tRNA with a 3' CCA end + 3 diphosphate. It carries out the reaction a tRNA with a 3' CCA end + 2 CTP + ATP = a tRNA with a 3' CCACCA end + 3 diphosphate. Its function is as follows. Catalyzes the addition and repair of the essential 3'-terminal CCA sequence in tRNAs without using a nucleic acid template. Adds these three nucleotides in the order of C, C, and A to the tRNA nucleotide-73, using CTP and ATP as substrates and producing inorganic pyrophosphate. tRNA 3'-terminal CCA addition is required both for tRNA processing and repair. Also involved in tRNA surveillance by mediating tandem CCA addition to generate a CCACCA at the 3' terminus of unstable tRNAs. While stable tRNAs receive only 3'-terminal CCA, unstable tRNAs are marked with CCACCA and rapidly degraded. This Stenotrophomonas maltophilia (strain K279a) protein is Multifunctional CCA protein.